Consider the following 522-residue polypeptide: Cytochrome P450 1A3 (522 aa).

A substrate-binding site is contributed by Phe229. Position 463 (Cys463) interacts with heme.

The protein belongs to the cytochrome P450 family. Requires heme as cofactor. In terms of tissue distribution, liver.

The protein localises to the endoplasmic reticulum membrane. It localises to the microsome membrane. The enzyme catalyses an organic molecule + reduced [NADPH--hemoprotein reductase] + O2 = an alcohol + oxidized [NADPH--hemoprotein reductase] + H2O + H(+). In terms of biological role, cytochromes P450 are a group of heme-thiolate monooxygenases. They oxidize a variety of structurally unrelated compounds, including steroids, fatty acids, and xenobiotics. This Oncorhynchus mykiss (Rainbow trout) protein is Cytochrome P450 1A3 (cyp1a3).